Here is a 139-residue protein sequence, read N- to C-terminus: uncharacterized protein (139 aa).

The protein localises to the mitochondrion. This is an uncharacterized protein from Marchantia polymorpha (Common liverwort).